Consider the following 972-residue polypeptide: MTNMILLSAVFLSLAILETHCANHISTGISTAGEVEIRCVSDNYVKKIMAYNRDRLSDATISIIQNYKQGPYGCDGVAQSSVISGAAKEKRINTPECITTGRIGGLIVRLKSKPKEEDLGKWECYFTDLTDNVDSKTLTDVLTKYNLPNSGYFNADGTPNDFTTELKVLDYDDVTKDVIMGCKLSTDLGTPPTMSDKQPYRSVHLTGDDRYYAEGDLYSRTSFSSTPYDCTGIPQNTNKYLYNCFNVAPNEYRSAAHRPPPFIALTAPSTPSNIILDNVAEKHAFTKHFFFPAEDKAVVDLRGKNVVISPLAVSDYTQIKMKYLSVQNAVFSPPEELINKLGEVLLKELSTATKFEIVNVDNNFAPTIPGDPYKMVMIADQSCVSGVNKNVIYTGLCKKSSSMSVITMTYFSSLDCDKTSHYAYIFYTGNEPREVEILPAGIQEAVGTPPDVTASNIPENSGGNDCESTTAQDVAEKLFGHLQTVCPTIPLCQMPSTVRTVITDGECAQRPFICNNRALVEYHVPLTELTSGSPFANDWSCTAVDKQSPMKTWHKGLRTELACGLGDLKQKYIDNSLPLIVKQGEDSYKVVCSTPPSLCTDNGLTPPRLNKDDKTYTKEELMAPDDYACTDHFDRVEVKKSYELIQDHFGCEYKLYCKITPHNVRCYITNFPQCQTPAYISGTIGSDTIPNTALTPESLSVMFIKGGLVSTTSLDLSIWTIKGIKLAQFTTAADLPDACELAANNIQVTHNMDFTSAGKTVTFTCINKLPLDNTCDISAGHSKDTRYKLEISNDGSNWVALAESTLAIDGSGVKTLTSTFSKEGGIFAEGDGVFSFLFYSLNDDAIRTMYTDRSNIQARCVKMFDSSSSTSTIKAVDYISYDTYRKSLVPKEPTVTTTTESPPPPTTTTRQIHSKEDFDRVKKELGEKLYHVLFFMGVLTVSVAGGVIILSFIGCLIMRKMEDAPQKTKYSV.

The N-terminal stretch at 1–21 is a signal peptide; that stretch reads MTNMILLSAVFLSLAILETHC. Residues 22–932 are Extracellular-facing; that stretch reads ANHISTGIST…KELGEKLYHV (911 aa). Positions 892–912 are disordered; sequence EPTVTTTTESPPPPTTTTRQI. A helical transmembrane segment spans residues 933–953; it reads LFFMGVLTVSVAGGVIILSFI. Residues 954–972 lie on the Cytoplasmic side of the membrane; sequence GCLIMRKMEDAPQKTKYSV.

The protein resides in the host membrane. This is an uncharacterized protein from Magallana gigas (Pacific oyster).